The primary structure comprises 1079 residues: DNA ligase 4 (1079 aa).

Residues 1–20 form a disordered region; the sequence is MAVHAPYNHAPPPTQEINGQ. Residues E295, K297, L298, R302, E357, F395, E460, K465, K482, and K484 each contribute to the ATP site. Catalysis depends on K297, which acts as the N6-AMP-lysine intermediate. E357 provides a ligand contact to Mg(2+). Residue E460 coordinates Mg(2+). The 91-residue stretch at 699-789 folds into the BRCT 1 domain; the sequence is VETSIFSDMT…TALPFLKEFL (91 aa). Over residues 838 to 847 the composition is skewed to acidic residues; that stretch reads DGEDKDEIDV. The tract at residues 838-942 is disordered; that stretch reads DGEDKDEIDV…SDVGVNGDDY (105 aa). Composition is skewed to basic and acidic residues over residues 848–878 and 900–914; these read EESR…KKLQ and MSLK…ERSR. The BRCT 2 domain maps to 968–1078; it reads DEDRIFYHLA…TLLDEDLYKP (111 aa).

Belongs to the ATP-dependent DNA ligase family. The cofactor is Mg(2+).

It is found in the nucleus. The enzyme catalyses ATP + (deoxyribonucleotide)n-3'-hydroxyl + 5'-phospho-(deoxyribonucleotide)m = (deoxyribonucleotide)n+m + AMP + diphosphate.. In terms of biological role, DNA ligase involved in DNA non-homologous end joining (NHEJ); required for double-strand break (DSB) repair. In Cryptococcus neoformans var. neoformans serotype D (strain JEC21 / ATCC MYA-565) (Filobasidiella neoformans), this protein is DNA ligase 4 (LIG4).